Consider the following 200-residue polypeptide: Male-specific histamine-binding salivary protein (200 aa).

Positions 1–18 (MKVLLLVLGAALCQNADA) are cleaved as a signal peptide. The histamine site is built by S37, D41, D56, and W59. 2 disulfides stabilise this stretch: C65/C193 and C137/C169. N-linked (GlcNAc...) asparagine glycosylation is present at N79. Histamine is bound by residues E97, Y115, F125, D138, E154, and W156.

This sequence belongs to the calycin superfamily. Histamine-binding salivary protein family. As to quaternary structure, homodimer; disulcde-linked. In terms of processing, N-glycosylated. Expressed in salivary glands.

It is found in the secreted. Its function is as follows. Salivary tick protein that acts by scavenging histamine at the wound site, outcompeting histamine receptors for histamine, thereby overcoming host inflammatory responses. Binds histamine with a high-affinity (Kd=1.2 nM). Contains two binding histamine sites (H and L), that appear to bind histamine with differing affinities. This is Male-specific histamine-binding salivary protein from Rhipicephalus appendiculatus (Brown ear tick).